Here is a 61-residue protein sequence, read N- to C-terminus: Temporin-MT3 (61 aa).

The first 22 residues, 1 to 22, serve as a signal peptide directing secretion; that stretch reads MFTLKKPLLLLFFLGTINLSLC. Residues 23–44 constitute a propeptide, removed in mature form; the sequence is EQERNAEEERRDEPDERNAEVE. Residue Leu59 is modified to Leucine amide.

This sequence belongs to the frog skin active peptide (FSAP) family. Temporin subfamily. As to expression, expressed by the skin glands.

The protein resides in the secreted. Its function is as follows. Antimicrobial peptide. The polypeptide is Temporin-MT3 (Amolops mantzorum (Sichuan torrent frog)).